The sequence spans 757 residues: uncharacterized protein (757 aa).

The 70-residue stretch at 640-709 folds into the S1 motif domain; the sequence is GMILEGVVSN…ARKRIALTMR (70 aa). A compositionally biased stretch (basic and acidic residues) spans 711-741; it reads DDEPGGAKHKMPSENRSRERTAGRKPQRNDR. A disordered region spans residues 711–757; it reads DDEPGGAKHKMPSENRSRERTAGRKPQRNDRAPANSAMADAFAKLKR.

This is an uncharacterized protein from Neisseria meningitidis serogroup B (strain ATCC BAA-335 / MC58).